Reading from the N-terminus, the 199-residue chain is uncharacterized protein (199 aa).

Positions 1–48 are disordered; that stretch reads MSANEFYSSGQQGQYNQQNNQERTGAPNNGQYGADNGNPNGERGLFST. At Ser-2 the chain carries N-acetylserine. The segment covering 7 to 21 has biased composition (low complexity); the sequence is YSSGQQGQYNQQNNQ. Residues 22–31 show a composition bias toward polar residues; it reads ERTGAPNNGQ. Residues Ser-53 and Ser-70 each carry the phosphoserine modification. Positions 89–199 are disordered; it reads RKEHKQQEQY…RQGFNGGSRW (111 aa). Composition is skewed to gly residues over residues 124 to 163, 170 to 179, and 186 to 199; these read GGFGGPGGPGGQGFGRQGPQGFGGPGPQEFGGPGGQGFGG, GGPGGQGFGG, and GGQGRQGFNGGSRW.

It localises to the mitochondrion. This is an uncharacterized protein from Saccharomyces cerevisiae (strain ATCC 204508 / S288c) (Baker's yeast).